A 91-amino-acid chain; its full sequence is DNA-binding protein HRL53 (91 aa).

Positions 57-91 are disordered; that stretch reads ATKGRNPSTGAEVDIPARNVPKFTPGKGLKDAVNG.

This sequence belongs to the bacterial histone-like protein family.

In terms of biological role, histone-like DNA-binding protein which is capable of wrapping DNA to stabilize it, and thus to prevent its denaturation under extreme environmental conditions. Binds to nod promoters and induces DNA binding. The sequence is that of DNA-binding protein HRL53 from Rhizobium leguminosarum.